We begin with the raw amino-acid sequence, 307 residues long: Olfactory receptor 12D2 (307 aa).

Residues 1–23 (MLNTTSVTEFLLLGVTDIQELQP) lie on the Extracellular side of the membrane. N-linked (GlcNAc...) asparagine glycosylation occurs at Asn-3. Residues 24–44 (FLFVVFLTIYFISVTGNGAVL) traverse the membrane as a helical segment. The Cytoplasmic portion of the chain corresponds to 45 to 52 (MIVISDPR). The chain crosses the membrane as a helical span at residues 53–73 (LHSLMYFFLGNLSYLDICYST). Over 74–97 (VTLPKMLQNFLSTHKAISFLGCIS) the chain is Extracellular. A disulfide bridge connects residues Cys-95 and Cys-187. A helical membrane pass occupies residues 98–118 (QLHFFHSLGSTESMLFAVMAF). Over 119-137 (DLSVAICKPLRYTVIMNPQ) the chain is Cytoplasmic. A helical transmembrane segment spans residues 138-158 (LCTQMAITIWVIGFFHALLHS). Residues 159 to 195 (VMTSRLNFCGSNRIHHFLCDIKPLLKLACGNTELNQW) lie on the Extracellular side of the membrane. A helical transmembrane segment spans residues 196–215 (LLSTVTGTIAMGPFFLTLLS). The Cytoplasmic portion of the chain corresponds to 216 to 236 (YFYIITYLFFKTRSCSMLCKA). A helical transmembrane segment spans residues 237–257 (LSTCASHFMVVILFYAPVLFT). Over 258–270 (YIHPALESFMDQD) the chain is Extracellular. The helical transmembrane segment at 271–291 (RIVAIMYTVVTPVLNPLIYTL) threads the bilayer. Residues 292–307 (RNKEVKGALGRVIRRL) lie on the Cytoplasmic side of the membrane.

Belongs to the G-protein coupled receptor 1 family.

Its subcellular location is the cell membrane. Its function is as follows. Odorant receptor. The chain is Olfactory receptor 12D2 (OR12D2) from Homo sapiens (Human).